We begin with the raw amino-acid sequence, 78 residues long: Major outer membrane lipoprotein Lpp (78 aa).

The N-terminal stretch at 1–20 (MNRTKLVLGAVILGSTLLAG) is a signal peptide. A lipid anchor (N-palmitoyl cysteine) is attached at Cys21. Cys21 carries S-diacylglycerol cysteine lipidation. A coiled-coil region spans residues 22-75 (SSNAKIDQLSTDVQTLNAKVDQLSNDVTAIRSDVQAAKDDAARANQRLDNQAHS). Repeats lie at residues 24–34 (NAKIDQLSTDV) and 38–48 (NAKVDQLSNDV). Lys78 bears the N6-murein peptidoglycan lysine mark.

Belongs to the Lpp family. In terms of assembly, homotrimer.

It localises to the cell outer membrane. The protein localises to the secreted. Its subcellular location is the cell wall. A highly abundant outer membrane lipoprotein that controls the distance between the inner and outer membranes. The only protein known to be covalently linked to the peptidoglycan network (PGN). Also non-covalently binds the PGN. The link between the cell outer membrane and PGN contributes to maintenance of the structural and functional integrity of the cell envelope, and maintains the correct distance between the PGN and the outer membrane. The polypeptide is Major outer membrane lipoprotein Lpp (Erwinia amylovora (Fire blight bacteria)).